The sequence spans 250 residues: Phosphoribosylaminoimidazole-succinocarboxamide synthase (250 aa).

The protein belongs to the SAICAR synthetase family.

The enzyme catalyses 5-amino-1-(5-phospho-D-ribosyl)imidazole-4-carboxylate + L-aspartate + ATP = (2S)-2-[5-amino-1-(5-phospho-beta-D-ribosyl)imidazole-4-carboxamido]succinate + ADP + phosphate + 2 H(+). Its pathway is purine metabolism; IMP biosynthesis via de novo pathway; 5-amino-1-(5-phospho-D-ribosyl)imidazole-4-carboxamide from 5-amino-1-(5-phospho-D-ribosyl)imidazole-4-carboxylate: step 1/2. In Synechococcus sp. (strain WH7803), this protein is Phosphoribosylaminoimidazole-succinocarboxamide synthase.